Reading from the N-terminus, the 115-residue chain is Large ribosomal subunit protein bL20 (115 aa).

It belongs to the bacterial ribosomal protein bL20 family.

Binds directly to 23S ribosomal RNA and is necessary for the in vitro assembly process of the 50S ribosomal subunit. It is not involved in the protein synthesizing functions of that subunit. The chain is Large ribosomal subunit protein bL20 from Chlorobaculum tepidum (strain ATCC 49652 / DSM 12025 / NBRC 103806 / TLS) (Chlorobium tepidum).